The following is a 359-amino-acid chain: 3-dehydroquinate synthase (359 aa).

NAD(+) contacts are provided by residues 71–76 (DGEAYK), 105–109 (GVIGD), 129–130 (TT), Lys-142, and Lys-151. Zn(2+) is bound by residues Glu-184, His-247, and His-264.

It belongs to the sugar phosphate cyclases superfamily. Dehydroquinate synthase family. The cofactor is Co(2+). Zn(2+) serves as cofactor. NAD(+) is required as a cofactor.

It localises to the cytoplasm. The enzyme catalyses 7-phospho-2-dehydro-3-deoxy-D-arabino-heptonate = 3-dehydroquinate + phosphate. The protein operates within metabolic intermediate biosynthesis; chorismate biosynthesis; chorismate from D-erythrose 4-phosphate and phosphoenolpyruvate: step 2/7. In terms of biological role, catalyzes the conversion of 3-deoxy-D-arabino-heptulosonate 7-phosphate (DAHP) to dehydroquinate (DHQ). This Burkholderia multivorans (strain ATCC 17616 / 249) protein is 3-dehydroquinate synthase.